The chain runs to 330 residues: Peroxidase N1 (330 aa).

The signal sequence occupies residues 1–29 (MEYYHHSINKMAMFMVILVLAIDVTMVLG). Residue Q30 is modified to Pyrrolidone carboxylic acid. 4 cysteine pairs are disulfide-bonded: C41–C117, C74–C79, C123–C326, and C201–C233. Catalysis depends on H72, which acts as the Proton acceptor. Ca(2+) is bound by residues D73, V76, G78, D80, and S82. P164 contributes to the substrate binding site. H194 lines the heme b pocket. A Ca(2+)-binding site is contributed by T195. The N-linked (GlcNAc...) asparagine glycan is linked to N212. Positions 246 and 254 each coordinate Ca(2+).

Belongs to the peroxidase family. Classical plant (class III) peroxidase subfamily. Ca(2+) is required as a cofactor. It depends on heme b as a cofactor. Expressed at a high level in roots and at a trace level in lower leaves. Not expressed in upper leaves, stems, flowers, seeds and shoot apices.

The protein resides in the secreted. The enzyme catalyses 2 a phenolic donor + H2O2 = 2 a phenolic radical donor + 2 H2O. Removal of H(2)O(2), oxidation of toxic reductants, biosynthesis and degradation of lignin, suberization, auxin catabolism, response to environmental stresses such as wounding, pathogen attack and oxidative stress. These functions might be dependent on each isozyme/isoform in each plant tissue. Can use NADH, NADPH and monolignols as substrates. This Nicotiana tabacum (Common tobacco) protein is Peroxidase N1.